The sequence spans 785 residues: Hypha-specific G1 cyclin-related protein 1 (785 aa).

A disordered region spans residues 1-42 (MINITKPLTPKSISQQKQQQQHPYKNISTTKSNNNPQASGSK). The span at 22 to 42 (HPYKNISTTKSNNNPQASGSK) shows a compositional bias: polar residues. Positions 71-238 (DIYDIMVNLI…VLNTLEWSLN (168 aa)) constitute a Cyclin N-terminal domain. 3 disordered regions span residues 408–433 (TTTT…TTPV), 447–679 (VSST…SKFN), and 750–774 (NNSG…DSPI). 2 stretches are compositionally biased toward low complexity: residues 447–473 (VSST…STTP) and 484–512 (NYSN…NNTT). Residues 513–535 (ISPVDSTTINSHTKNSSQLNYQY) are compositionally biased toward polar residues. The span at 579–613 (NSANKNSNKSNSANNNNTTTIATTTTTTTNNNNNS) shows a compositional bias: low complexity. Residues 621 to 631 (LSYNNYFNSPN) are compositionally biased toward polar residues. Residues 646–679 (QQQQQNQGQNQQQPLQLYQGDNNNNGTNTNSKFN) are compositionally biased toward low complexity. Positions 754-764 (NGKGNGNGGSG) are enriched in gly residues. The segment covering 765–774 (TPISENDSPI) has biased composition (polar residues).

It belongs to the cyclin family. As to quaternary structure, interacts with CDC28.

In terms of biological role, hypha-specific G1 cyclin-related protein involved in regulation of morphogenesis and opaque cells filamentous growth, and required for both conventional and pheromone-stimulated biofilm formation. Required to maintain hyphal tip localization of actin and SPA2. Regulates the CDC28 kinase during hyphal growth. The CDC28-HGC1 complex phosphorylates and prevents RGA2 from localizing to hyphal tips, leading to localized CDC42 activation for hyphal extension. The CDC28-HGC1 complex also phosphorylates SEC2 and maintains CDC11 phosphorylation throughout hyphal growth. Moreover CDC28-HGC1 phosphorylation of EFG1 represses cell separation genes during hyphal growth. Also partially controls SEP7 phosphorylation status and subsequent septin ring dynamics. Required for virulence and especially mediates dynamic adhesion to endothelium of blood vessels during circulation. The chain is Hypha-specific G1 cyclin-related protein 1 (HGC1) from Candida albicans (strain SC5314 / ATCC MYA-2876) (Yeast).